The primary structure comprises 425 residues: UDP-N-acetylglucosamine 1-carboxyvinyltransferase (425 aa).

Residue 23-24 (KN) coordinates phosphoenolpyruvate. A UDP-N-acetyl-alpha-D-glucosamine-binding site is contributed by Arg-100. Cys-124 acts as the Proton donor in catalysis. The residue at position 124 (Cys-124) is a 2-(S-cysteinyl)pyruvic acid O-phosphothioketal. Positions 313 and 335 each coordinate UDP-N-acetyl-alpha-D-glucosamine.

This sequence belongs to the EPSP synthase family. MurA subfamily.

It localises to the cytoplasm. It carries out the reaction phosphoenolpyruvate + UDP-N-acetyl-alpha-D-glucosamine = UDP-N-acetyl-3-O-(1-carboxyvinyl)-alpha-D-glucosamine + phosphate. It functions in the pathway cell wall biogenesis; peptidoglycan biosynthesis. Functionally, cell wall formation. Adds enolpyruvyl to UDP-N-acetylglucosamine. This Wolbachia sp. subsp. Brugia malayi (strain TRS) protein is UDP-N-acetylglucosamine 1-carboxyvinyltransferase.